A 565-amino-acid polypeptide reads, in one-letter code: Dihydroxy-acid dehydratase (565 aa).

Position 53 (cysteine 53) interacts with [2Fe-2S] cluster. Aspartate 85 contacts Mg(2+). [2Fe-2S] cluster is bound at residue cysteine 126. Positions 127 and 128 each coordinate Mg(2+). Lysine 128 is subject to N6-carboxylysine. Cysteine 198 provides a ligand contact to [2Fe-2S] cluster. A Mg(2+)-binding site is contributed by glutamate 450. The active-site Proton acceptor is the serine 476.

Belongs to the IlvD/Edd family. Homodimer. It depends on [2Fe-2S] cluster as a cofactor. Requires Mg(2+) as cofactor.

It catalyses the reaction (2R)-2,3-dihydroxy-3-methylbutanoate = 3-methyl-2-oxobutanoate + H2O. It carries out the reaction (2R,3R)-2,3-dihydroxy-3-methylpentanoate = (S)-3-methyl-2-oxopentanoate + H2O. It functions in the pathway amino-acid biosynthesis; L-isoleucine biosynthesis; L-isoleucine from 2-oxobutanoate: step 3/4. The protein operates within amino-acid biosynthesis; L-valine biosynthesis; L-valine from pyruvate: step 3/4. Its function is as follows. Functions in the biosynthesis of branched-chain amino acids. Catalyzes the dehydration of (2R,3R)-2,3-dihydroxy-3-methylpentanoate (2,3-dihydroxy-3-methylvalerate) into 2-oxo-3-methylpentanoate (2-oxo-3-methylvalerate) and of (2R)-2,3-dihydroxy-3-methylbutanoate (2,3-dihydroxyisovalerate) into 2-oxo-3-methylbutanoate (2-oxoisovalerate), the penultimate precursor to L-isoleucine and L-valine, respectively. The chain is Dihydroxy-acid dehydratase from Synechococcus sp. (strain JA-2-3B'a(2-13)) (Cyanobacteria bacterium Yellowstone B-Prime).